Here is a 338-residue protein sequence, read N- to C-terminus: DNA-directed RNA polymerase subunit alpha (338 aa).

The alpha N-terminal domain (alpha-NTD) stretch occupies residues 1-234 (MIHKNWAELI…DQLGIFVNFE (234 aa)). Residues 250-338 (FNPLLLKKVD…DLAKKFEDSF (89 aa)) form an alpha C-terminal domain (alpha-CTD) region.

This sequence belongs to the RNA polymerase alpha chain family. As to quaternary structure, homodimer. The RNAP catalytic core consists of 2 alpha, 1 beta, 1 beta' and 1 omega subunit. When a sigma factor is associated with the core the holoenzyme is formed, which can initiate transcription.

The enzyme catalyses RNA(n) + a ribonucleoside 5'-triphosphate = RNA(n+1) + diphosphate. Its function is as follows. DNA-dependent RNA polymerase catalyzes the transcription of DNA into RNA using the four ribonucleoside triphosphates as substrates. This Roseobacter denitrificans (strain ATCC 33942 / OCh 114) (Erythrobacter sp. (strain OCh 114)) protein is DNA-directed RNA polymerase subunit alpha.